The primary structure comprises 266 residues: tRNA dimethylallyltransferase (266 aa).

This sequence belongs to the IPP transferase family. Monomer. Mg(2+) is required as a cofactor.

It catalyses the reaction adenosine(37) in tRNA + dimethylallyl diphosphate = N(6)-dimethylallyladenosine(37) in tRNA + diphosphate. Its function is as follows. Catalyzes the transfer of a dimethylallyl group onto the adenine at position 37 in tRNAs that read codons beginning with uridine, leading to the formation of N6-(dimethylallyl)adenosine (i(6)A). The protein is tRNA dimethylallyltransferase (miaA) of Helicobacter acinonychis (strain Sheeba).